The primary structure comprises 390 residues: Glutamyl-tRNA reductase (390 aa).

Substrate contacts are provided by residues Thr-46–Arg-49, Ser-96, Glu-101–Gln-103, and Gln-107. Cys-47 functions as the Nucleophile in the catalytic mechanism. Residue Gly-176–Ala-181 participates in NADP(+) binding.

This sequence belongs to the glutamyl-tRNA reductase family. As to quaternary structure, homodimer.

The catalysed reaction is (S)-4-amino-5-oxopentanoate + tRNA(Glu) + NADP(+) = L-glutamyl-tRNA(Glu) + NADPH + H(+). It functions in the pathway porphyrin-containing compound metabolism; protoporphyrin-IX biosynthesis; 5-aminolevulinate from L-glutamyl-tRNA(Glu): step 1/2. Catalyzes the NADPH-dependent reduction of glutamyl-tRNA(Glu) to glutamate 1-semialdehyde (GSA). This Thermus thermophilus (strain ATCC 27634 / DSM 579 / HB8) protein is Glutamyl-tRNA reductase.